A 263-amino-acid chain; its full sequence is Syntaxin pep12 (263 aa).

Residues arginine 140 to lysine 159 are disordered. Positions valine 142–lysine 159 are enriched in polar residues. A phosphoserine mark is found at serine 148 and serine 163. The 63-residue stretch at glutamine 169 to alanine 231 folds into the t-SNARE coiled-coil homology domain.

The protein belongs to the syntaxin family.

Its subcellular location is the endoplasmic reticulum. Functionally, has a role in vesicle-mediated transport but not with protein transport from Golgi to vesicle. In Schizosaccharomyces pombe (strain 972 / ATCC 24843) (Fission yeast), this protein is Syntaxin pep12 (pep12).